Here is a 319-residue protein sequence, read N- to C-terminus: Putative peptide permease protein BOV_A0351 (319 aa).

6 consecutive transmembrane segments (helical) span residues Leu9 to Leu29, Leu102 to Ile122, Leu138 to Phe158, Leu182 to Met202, Leu242 to Ile262, and Tyr284 to Leu304. The ABC transmembrane type-1 domain occupies Ile98–Thr305.

Belongs to the binding-protein-dependent transport system permease family. The complex is composed of two ATP-binding proteins (BOV_A0347 and BOV_A0348), two transmembrane proteins (BOV_A0350 and BOV_A0351) and a solute-binding protein (BOV_A0352).

It is found in the cell inner membrane. In terms of biological role, probably part of an ABC transporter complex that could be involved in peptide import. Probably responsible for the translocation of the substrate across the membrane. The sequence is that of Putative peptide permease protein BOV_A0351 from Brucella ovis (strain ATCC 25840 / 63/290 / NCTC 10512).